We begin with the raw amino-acid sequence, 259 residues long: DNA-directed RNA polymerase 30 kDa polypeptide (259 aa).

Residues 155–195 (YNTPCPNCKSRNTTPMMIQTRAADEPPLVRHACRDCKQHFK) form a TFIIS-type zinc finger. The Zn(2+) site is built by Cys-159, Cys-162, Cys-187, and Cys-190. The segment at 214–259 (ENKEITEILPDNNPSPPESPEPASPIDDGLIRSTFDRNDEPPEDDE) is disordered. The segment covering 226 to 236 (NPSPPESPEPA) has biased composition (pro residues).

The protein belongs to the poxviridae DNA-directed RNA polymerase 30 kDa subunit family. As to quaternary structure, the DNA-dependent RNA polymerase (vRNAP) consists of eight subunits encoded by early viral genes and termed according to their apparent molecular masses Rpo147, Rpo132, Rpo35, Rpo30, Rpo22, Rpo19, Rpo18, and Rpo7. The same holoenzyme, with the addition of the transcription-specificity factor RAP94, is used for early gene expression.

The protein resides in the virion. The protein localises to the host cytoplasm. The enzyme catalyses RNA(n) + a ribonucleoside 5'-triphosphate = RNA(n+1) + diphosphate. Functionally, part of the DNA-dependent RNA polymerase which catalyzes the transcription of viral DNA into RNA using the four ribonucleoside triphosphates as substrates. Responsible for the transcription of early, intermediate and late genes. DNA-dependent RNA polymerase associates with the early transcription factor (ETF), itself composed of OPG118/D6 and OPG134/A8, thereby allowing the early genes transcription. Late transcription, and probably also intermediate transcription, require newly synthesized RNA polymerase. In Homo sapiens (Human), this protein is DNA-directed RNA polymerase 30 kDa polypeptide (OPG066).